The following is a 238-amino-acid chain: MTWDGLPTQPLLMLLMLLFAAGSGSALAGCPGCGAGMQTGCRGGCVEEEDAGSPADGCTEAGGCLRREGQPCGVYSPKCAPGLQCQPRENEEAPLRALLIGQGRCQRARGPSEETTKESKPQGGASRSRDTNHRDRQKNPRTSAAPIRPNPVQDSEMGPCRRHLDSVLQQLQTEVFRGGARGLYVPNCDLRGFYRKQQCRSSQGNRRGPCWCVDPMGQPLPVSPDGQGSTQCSARSSG.

The N-terminal stretch at 1–25 (MTWDGLPTQPLLMLLMLLFAAGSGS) is a signal peptide. Residues 26–108 (ALAGCPGCGA…LIGQGRCQRA (83 aa)) enclose the IGFBP N-terminal domain. 5 disulfides stabilise this stretch: cysteine 30/cysteine 33, cysteine 41/cysteine 45, cysteine 58/cysteine 64, cysteine 72/cysteine 85, and cysteine 79/cysteine 105. The disordered stretch occupies residues 104–159 (RCQRARGPSEETTKESKPQGGASRSRDTNHRDRQKNPRTSAAPIRPNPVQDSEMGP). Composition is skewed to basic and acidic residues over residues 110 to 120 (GPSEETTKESK) and 127 to 138 (RSRDTNHRDRQK). A Thyroglobulin type-1 domain is found at 157-232 (MGPCRRHLDS…SPDGQGSTQC (76 aa)). 3 cysteine pairs are disulfide-bonded: cysteine 160–cysteine 188, cysteine 199–cysteine 210, and cysteine 212–cysteine 232. The segment at 218 to 238 (QPLPVSPDGQGSTQCSARSSG) is disordered. Residues 226–238 (GQGSTQCSARSSG) show a composition bias toward polar residues.

Interacts (via C-terminal domain) with PHB2. O-glycosylated.

The protein resides in the secreted. Functionally, IGF-binding proteins prolong the half-life of the IGFs and have been shown to either inhibit or stimulate the growth promoting effects of the IGFs on cell culture. They alter the interaction of IGFs with their cell surface receptors. Activates the MAPK signaling pathway and induces cell migration. This is Insulin-like growth factor-binding protein 6 (Igfbp6) from Mus musculus (Mouse).